Consider the following 544-residue polypeptide: Epidermal growth factor-like protein 6 (544 aa).

Positions Met-1–Ser-30 are cleaved as a signal peptide. The EGF-like 1 domain maps to Arg-63 to Asn-98. 6 disulfide bridges follow: Cys-67-Cys-80, Cys-71-Cys-86, Cys-88-Cys-97, Cys-104-Cys-115, Cys-111-Cys-124, and Cys-126-Cys-138. In terms of domain architecture, EGF-like 2; calcium-binding spans Asp-100 to Ser-139. The region spanning Cys-144–Cys-178 is the EGF-like 3 domain. In terms of domain architecture, EGF-like 4; calcium-binding spans Asp-180–Asn-218. 5 disulfides stabilise this stretch: Cys-184–Cys-197, Cys-191–Cys-206, Cys-229–Cys-242, Cys-236–Cys-251, and Cys-253–Cys-264. Positions Asp-225–Ser-265 constitute an EGF-like 5; calcium-binding domain. Residues Gly-332–Asn-357 are disordered. Residues Asn-333 to Gly-367 are a coiled coil. Positions Asp-334–Asn-357 are enriched in acidic residues. The MAM domain maps to Val-399–Asp-543.

Belongs to the nephronectin family.

The protein resides in the secreted. It localises to the extracellular space. The protein localises to the extracellular matrix. It is found in the basement membrane. In terms of biological role, may play a role in organ morphogenesis. Promotes matrix assembly. In Xenopus laevis (African clawed frog), this protein is Epidermal growth factor-like protein 6 (egfl6).